Here is a 523-residue protein sequence, read N- to C-terminus: Cytochrome P450 52-N1 (523 aa).

Residues 5–25 form a helical membrane-spanning segment; sequence AVLGAFAAFLLYMDVLYPFVI. Cys469 contacts heme.

Belongs to the cytochrome P450 family. Requires heme as cofactor.

The protein resides in the membrane. The enzyme catalyses an omega-methyl-long-chain fatty acid + reduced [NADPH--hemoprotein reductase] + O2 = an omega-hydroxy-long-chain fatty acid + oxidized [NADPH--hemoprotein reductase] + H2O + H(+). It catalyses the reaction (9Z,12Z)-octadecadienoate + reduced [NADPH--hemoprotein reductase] + O2 = 18-hydroxy-(9Z,12Z)-octadecadienoate + oxidized [NADPH--hemoprotein reductase] + H2O + H(+). The catalysed reaction is (9Z)-octadecenoate + reduced [NADPH--hemoprotein reductase] + O2 = 18-hydroxy-(9Z)-octadecenoate + oxidized [NADPH--hemoprotein reductase] + H2O + H(+). It carries out the reaction hexadecanoate + reduced [NADPH--hemoprotein reductase] + O2 = 16-hydroxyhexadecanoate + oxidized [NADPH--hemoprotein reductase] + H2O + H(+). The enzyme catalyses (9Z)-hexadecenoate + reduced [NADPH--hemoprotein reductase] + O2 = (9Z)-16-hydroxyhexadec-9-enoate + oxidized [NADPH--hemoprotein reductase] + H2O + H(+). It catalyses the reaction octadecanoate + reduced [NADPH--hemoprotein reductase] + O2 = 18-hydroxyoctadecanoate + oxidized [NADPH--hemoprotein reductase] + H2O + H(+). Catalyzes the terminal (at the omega-position) hydroxylation of a fatty acid. Probably involved in alkane metabolism. Linoleic acid is the preferred substrate, but it acts on various other C-16, C-18 and C-20 saturated and unsaturated fatty acids, namely palmitic, palmitoleic, stearic, oleic, alpha-linoleic, arachidonic and myristic acid. The polypeptide is Cytochrome P450 52-N1 (Starmerella bombicola (Yeast)).